Reading from the N-terminus, the 212-residue chain is Adenylate kinase (212 aa).

ATP is bound at residue 10 to 15 (GAGKGT). An NMP region spans residues 30–59 (STGDMFRAAMANQTEMGVLAKSYIDKGELV). Residues Thr31, Arg36, 57 to 59 (ELV), 86 to 89 (GYPR), and Gln93 each bind AMP. The interval 127–159 (GRIIHRQTGETFHKVFNPPANYNEEDYYQREDD) is LID. ATP-binding positions include Arg128 and 137–138 (TF). The AMP site is built by Arg156 and Arg167. Gln195 contacts ATP.

It belongs to the adenylate kinase family. In terms of assembly, monomer.

It is found in the cytoplasm. The catalysed reaction is AMP + ATP = 2 ADP. It functions in the pathway purine metabolism; AMP biosynthesis via salvage pathway; AMP from ADP: step 1/1. In terms of biological role, catalyzes the reversible transfer of the terminal phosphate group between ATP and AMP. Plays an important role in cellular energy homeostasis and in adenine nucleotide metabolism. The protein is Adenylate kinase of Streptococcus gordonii (strain Challis / ATCC 35105 / BCRC 15272 / CH1 / DL1 / V288).